Reading from the N-terminus, the 297-residue chain is Bifunctional protein FolD (297 aa).

Residues 167–169 (GRS) and Ile-233 contribute to the NADP(+) site.

It belongs to the tetrahydrofolate dehydrogenase/cyclohydrolase family. Homodimer.

The catalysed reaction is (6R)-5,10-methylene-5,6,7,8-tetrahydrofolate + NADP(+) = (6R)-5,10-methenyltetrahydrofolate + NADPH. It catalyses the reaction (6R)-5,10-methenyltetrahydrofolate + H2O = (6R)-10-formyltetrahydrofolate + H(+). Its pathway is one-carbon metabolism; tetrahydrofolate interconversion. Its function is as follows. Catalyzes the oxidation of 5,10-methylenetetrahydrofolate to 5,10-methenyltetrahydrofolate and then the hydrolysis of 5,10-methenyltetrahydrofolate to 10-formyltetrahydrofolate. This chain is Bifunctional protein FolD, found in Zymomonas mobilis subsp. mobilis (strain ATCC 31821 / ZM4 / CP4).